The primary structure comprises 159 residues: Lipoprotein LpqH (159 aa).

The N-terminal stretch at 1–21 is a signal peptide; it reads MKRGLTVAVAGAAILVAGLSG. The N-palmitoyl cysteine moiety is linked to residue C22. Residue C22 is the site of S-diacylglycerol cysteine attachment. The interval 24–51 is disordered; sequence SNKSTTGSGETTTAAGTTASPGAASGPK. The segment covering 27–49 has biased composition (low complexity); sequence STTGSGETTTAAGTTASPGAASG.

It belongs to the mycobacterial 19 kDa antigen family. Post-translationally, modified by Lgt on Cys-22 with an S-linked diacylglycerol with a mixture of C16, C18 and C19 fatty acids, signal peptide is removed by LspA, modifed by Lnt with an amide-linked mixture of C16 and C19 fatty acids.

The protein localises to the cell membrane. In terms of biological role, might be involved in ligand transport. A host TLR2 agonist, modifies host gene expression in response to pathogen. This chain is Lipoprotein LpqH (lpqH), found in Mycobacterium bovis (strain ATCC BAA-935 / AF2122/97).